The sequence spans 100 residues: U-myrmeciitoxin(01)-Mg7c (100 aa).

The first 17 residues, 1–17, serve as a signal peptide directing secretion; it reads MKLSYLSLALAIILVLA. Residues 18-50 constitute a propeptide that is removed on maturation; the sequence is IVYSPHMEVKALADAEPDAIGFADAFGEADAEP. A glycan (O-linked (GalNAc...) serine) is linked at Ser-85. Thr-94 and Thr-95 each carry an O-linked (GalNAc...) threonine glycan.

This sequence belongs to the formicidae venom precursor-01 superfamily. In terms of processing, glycosylation is critical to maintaining the aqueous solubility of this protein, but does not directly contribute to its activity. Expressed by the venom gland.

The protein localises to the secreted. The protein resides in the target cell membrane. Functionally, neurotoxin that triggers pain behavior and inflammation in mammals, and is paralytic and lethal to insects. Causes a time-dependent increase in cell leak current. May act by targeting membranes. The chain is U-myrmeciitoxin(01)-Mg7c from Myrmecia gulosa (Red bulldog ant).